Reading from the N-terminus, the 499-residue chain is Alpha-internexin (499 aa).

Residues 1–87 form a head region; that stretch reads MSFGSEHYLC…SQAAARTNEY (87 aa). Phosphoserine is present on serine 72. The tract at residues 88–129 is coil 1A; the sequence is KIIRTNEKEQLQGLNDRFAVFIEKVHQLETQNRALEAELAAL. The IF rod domain maps to 94-407; that stretch reads EKEQLQGLND…KLLEGEETRF (314 aa). The tract at residues 130–142 is linker 1; the sequence is RQRHAEPSRVGEL. The tract at residues 143-238 is coil 1B; the sequence is FQRELRDLRA…QVHDEEVAEL (96 aa). Serine 219 bears the Phosphoserine mark. The linker 2 stretch occupies residues 239–262; that stretch reads LATLQASSQAAAEVDVTVAKPDLT. Positions 263-408 are coil 2; the sequence is SALREIRAQY…LLEGEETRFS (146 aa). An N6-acetyllysine modification is found at lysine 290. Position 335 is a phosphoserine (serine 335). Residues 409 to 499 are tail; that stretch reads TSGLSISGLN…EETTISSQKI (91 aa). The segment at 441–466 is disordered; it reads STGLSLKKEEEEEEASKVASKKTSQI. Phosphoserine is present on residues serine 469 and serine 496.

It belongs to the intermediate filament family. Forms homodimers (in vitro). Forms heterodimers with NEFL, NEFM or NEFH (in vitro). O-glycosylated. Found predominantly in adult CNS.

Functionally, class-IV neuronal intermediate filament that is able to self-assemble. It is involved in the morphogenesis of neurons. It may form an independent structural network without the involvement of other neurofilaments or it may cooperate with NEFL to form the filamentous backbone to which NEFM and NEFH attach to form the cross-bridges. May also cooperate with the neuronal intermediate filament protein PRPH to form filamentous networks. In Homo sapiens (Human), this protein is Alpha-internexin (INA).